The chain runs to 333 residues: uncharacterized protein (333 aa).

This sequence belongs to the polysaccharide synthase family.

This is an uncharacterized protein from Methanocaldococcus jannaschii (strain ATCC 43067 / DSM 2661 / JAL-1 / JCM 10045 / NBRC 100440) (Methanococcus jannaschii).